Consider the following 141-residue polypeptide: Hemoglobin subunit alpha-1 (141 aa).

The Globin domain occupies 1 to 141 (VLSPADKNNV…VSTVLTSKYR (141 aa)). Histidine 58 provides a ligand contact to O2. Residue histidine 87 coordinates heme b.

This sequence belongs to the globin family. In terms of assembly, heterotetramer of two alpha chains and two beta chains. As to expression, red blood cells.

In terms of biological role, involved in oxygen transport from the lung to the various peripheral tissues. This is Hemoglobin subunit alpha-1 from Varecia variegata (Black-and-white ruffed lemur).